Consider the following 92-residue polypeptide: MANSAQARKRARQAAKANSHNSALRSKFRTAIKAVRKAIDAGDKAKAAEIFLASSKTIDIIADKKIVHKNKAARHKSRLAAAIKGLQAPAAQ.

The interval 1–24 (MANSAQARKRARQAAKANSHNSAL) is disordered.

This sequence belongs to the bacterial ribosomal protein bS20 family.

Its function is as follows. Binds directly to 16S ribosomal RNA. This is Small ribosomal subunit protein bS20 from Paraburkholderia xenovorans (strain LB400).